Here is an 829-residue protein sequence, read N- to C-terminus: Disintegrin and metalloproteinase domain-containing protein 23 (829 aa).

The signal sequence occupies residues 1–55 (MKPPGSISRRPTLTGCSLPGASCGPGRCPAGPVPARAPPCRLLLVLLLLPALATS). Positions 56–283 (SRPRARGAAA…ELQWLRRRKR (228 aa)) are excised as a propeptide. N72, N92, N97, and N260 each carry an N-linked (GlcNAc...) asparagine glycan. Topologically, residues 284-789 (AVNPSRGVFE…EGPKGPSATN (506 aa)) are extracellular. Residues 296 to 493 (KYLELMIVND…GGGACLFNRP (198 aa)) form the Peptidase M12B domain. 3 disulfide bridges follow: C405-C488, C447-C472, and C449-C456. The Disintegrin domain maps to 499-585 (PTECGNGYVE…QCPPNLHKQD (87 aa)). N-linked (GlcNAc...) asparagine glycosylation is found at N544 and N545. The cysteines at positions 557 and 577 are disulfide-linked. N661 and N729 each carry an N-linked (GlcNAc...) asparagine glycan. Residues 729 to 766 (NMSSCPLDSRGKVCSGHGVCSNEATCICDFTWAGTDCS) enclose the EGF-like domain. Intrachain disulfides connect C733–C748, C742–C754, and C756–C765. The chain crosses the membrane as a helical span at residues 790-810 (LIIGSIAGAILVAAIVLGGTG). The Cytoplasmic segment spans residues 811-829 (WGFKNVKKRRFDPTQQGPI).

In terms of assembly, can bind to LGI1 and LGI4. As to expression, brain specific.

Its subcellular location is the cell membrane. The protein localises to the secreted. May play a role in cell-cell and cell-matrix interactions. This is a non-catalytic metalloprotease-like protein. In Mus musculus (Mouse), this protein is Disintegrin and metalloproteinase domain-containing protein 23 (Adam23).